The sequence spans 565 residues: Adenine deaminase (565 aa).

This sequence belongs to the metallo-dependent hydrolases superfamily. Adenine deaminase family. Mn(2+) is required as a cofactor.

It catalyses the reaction adenine + H2O + H(+) = hypoxanthine + NH4(+). The chain is Adenine deaminase from Cereibacter sphaeroides (strain ATCC 17025 / ATH 2.4.3) (Rhodobacter sphaeroides).